Consider the following 474-residue polypeptide: Putative matrix metalloproteinase (474 aa).

A signal peptide spans 1 to 17; that stretch reads MIIYFAVITCSLKLCRS. H189 is a binding site for Zn(2+). E190 is a catalytic residue. 2 residues coordinate Zn(2+): H193 and H199. Residues 299-344 form a Hemopexin repeat; it reads AGVYDAISYVRGDLYVFVGDLHWRFDTSGMLHNGYPQPTGATWRLP.

This sequence belongs to the peptidase M10A family. Zn(2+) serves as cofactor.

In Heliothis virescens ascovirus 3e (HvAV-3e), this protein is Putative matrix metalloproteinase.